The following is a 72-amino-acid chain: Translation initiation factor IF-1 (72 aa).

Residues 1 to 72 (MSKEDMIEFS…SKGRITFRFK (72 aa)) enclose the S1-like domain.

It belongs to the IF-1 family. Component of the 30S ribosomal translation pre-initiation complex which assembles on the 30S ribosome in the order IF-2 and IF-3, IF-1 and N-formylmethionyl-tRNA(fMet); mRNA recruitment can occur at any time during PIC assembly.

It is found in the cytoplasm. Functionally, one of the essential components for the initiation of protein synthesis. Stabilizes the binding of IF-2 and IF-3 on the 30S subunit to which N-formylmethionyl-tRNA(fMet) subsequently binds. Helps modulate mRNA selection, yielding the 30S pre-initiation complex (PIC). Upon addition of the 50S ribosomal subunit IF-1, IF-2 and IF-3 are released leaving the mature 70S translation initiation complex. In Gluconacetobacter diazotrophicus (strain ATCC 49037 / DSM 5601 / CCUG 37298 / CIP 103539 / LMG 7603 / PAl5), this protein is Translation initiation factor IF-1.